The sequence spans 217 residues: 3,4-dihydroxy-2-butanone 4-phosphate synthase (217 aa).

Residues 37 to 38 (RE), Asp-42, 150 to 154 (RRGHT), and Glu-174 contribute to the D-ribulose 5-phosphate site. Glu-38 serves as a coordination point for Mg(2+). His-153 is a binding site for Mg(2+).

The protein belongs to the DHBP synthase family. As to quaternary structure, homodimer. It depends on Mg(2+) as a cofactor. Requires Mn(2+) as cofactor.

The catalysed reaction is D-ribulose 5-phosphate = (2S)-2-hydroxy-3-oxobutyl phosphate + formate + H(+). It functions in the pathway cofactor biosynthesis; riboflavin biosynthesis; 2-hydroxy-3-oxobutyl phosphate from D-ribulose 5-phosphate: step 1/1. Its function is as follows. Catalyzes the conversion of D-ribulose 5-phosphate to formate and 3,4-dihydroxy-2-butanone 4-phosphate. In Yersinia pseudotuberculosis serotype O:1b (strain IP 31758), this protein is 3,4-dihydroxy-2-butanone 4-phosphate synthase.